The primary structure comprises 484 residues: Poly(A) polymerase alpha-B (484 aa).

Residues 240–257 (RKQLHQLLPSHVLPKKKK) carry the Nuclear localization signal 1 motif. Disordered stretches follow at residues 276 to 314 (SVDS…PVSL), 326 to 356 (VPQN…SSTP), and 375 to 484 (KPVT…RLNR). A Nuclear localization signal 2 motif is present at residues 392 to 407 (KRTSSPTNEESPKKTK). Residues 423 to 441 (EQNKLEPEELKEVHSEEKS) show a composition bias toward basic and acidic residues. The segment covering 451 to 464 (SSQRSSSTDLSDIS) has biased composition (low complexity).

It belongs to the poly(A) polymerase family. Monomer.

The protein resides in the nucleus. The catalysed reaction is RNA(n) + ATP = RNA(n)-3'-adenine ribonucleotide + diphosphate. In terms of biological role, polymerase that creates the 3'-poly(A) tail of mRNA's. May acquire specificity through interaction with a cleavage and polyadenylation factor (CPSF). This chain is Poly(A) polymerase alpha-B (papola-b), found in Xenopus laevis (African clawed frog).